Here is a 428-residue protein sequence, read N- to C-terminus: Serine--tRNA ligase (428 aa).

An L-serine-binding site is contributed by 231-233 (TSE). Residues 262-264 (RRE) and Val278 contribute to the ATP site. Glu285 serves as a coordination point for L-serine. Residue 349 to 352 (ELTS) coordinates ATP. Thr384 is a binding site for L-serine.

Belongs to the class-II aminoacyl-tRNA synthetase family. Type-1 seryl-tRNA synthetase subfamily. As to quaternary structure, homodimer. The tRNA molecule binds across the dimer.

It is found in the cytoplasm. The catalysed reaction is tRNA(Ser) + L-serine + ATP = L-seryl-tRNA(Ser) + AMP + diphosphate + H(+). It carries out the reaction tRNA(Sec) + L-serine + ATP = L-seryl-tRNA(Sec) + AMP + diphosphate + H(+). The protein operates within aminoacyl-tRNA biosynthesis; selenocysteinyl-tRNA(Sec) biosynthesis; L-seryl-tRNA(Sec) from L-serine and tRNA(Sec): step 1/1. Its function is as follows. Catalyzes the attachment of serine to tRNA(Ser). Is also able to aminoacylate tRNA(Sec) with serine, to form the misacylated tRNA L-seryl-tRNA(Sec), which will be further converted into selenocysteinyl-tRNA(Sec). The polypeptide is Serine--tRNA ligase (Bifidobacterium longum (strain DJO10A)).